Here is an 86-residue protein sequence, read N- to C-terminus: Allergen Api g 5 (86 aa).

A glycan (N-linked (GlcNAc...) asparagine) is linked at Asn-62.

This sequence belongs to the oxygen-dependent FAD-linked oxidoreductase family. Requires FAD as cofactor. In terms of processing, carries MUXF and MMXF, two complex N-linked glycans with alpha-1,3-fucose and beta-1,2-xylose residues in their structures. MMXF is added to Asn-62.

This is Allergen Api g 5 from Apium graveolens (Celery).